The sequence spans 163 residues: Arginine repressor (163 aa).

It belongs to the ArgR family.

It localises to the cytoplasm. The protein operates within amino-acid biosynthesis; L-arginine biosynthesis [regulation]. Regulates arginine biosynthesis genes. The chain is Arginine repressor from Corynebacterium diphtheriae (strain ATCC 700971 / NCTC 13129 / Biotype gravis).